The primary structure comprises 380 residues: Cytochrome b (380 aa).

The next 4 helical transmembrane spans lie at 33-53, 77-98, 113-133, and 178-198; these read FGSL…FLAM, WLIR…YMHI, WNIG…GYVL, and FFAF…LHLL. His-83 and His-97 together coordinate heme b. Residues His-182 and His-196 each contribute to the heme b site. His-201 serves as a coordination point for a ubiquinone. 4 consecutive transmembrane segments (helical) span residues 226-246, 288-308, 320-340, and 347-367; these read YKDL…ALFA, LGGV…PILH, LTQF…WIGG, and FIII…VLAP.

It belongs to the cytochrome b family. As to quaternary structure, the cytochrome bc1 complex contains 3 respiratory subunits (MT-CYB, CYC1 and UQCRFS1), 2 core proteins (UQCRC1 and UQCRC2) and probably 6 low-molecular weight proteins. The cofactor is heme b.

The protein localises to the mitochondrion inner membrane. Its function is as follows. Component of the ubiquinol-cytochrome c reductase complex (complex III or cytochrome b-c1 complex) that is part of the mitochondrial respiratory chain. The b-c1 complex mediates electron transfer from ubiquinol to cytochrome c. Contributes to the generation of a proton gradient across the mitochondrial membrane that is then used for ATP synthesis. The protein is Cytochrome b (mt-cyb) of Salmo trutta (Brown trout).